A 34-amino-acid polypeptide reads, in one-letter code: U2-theraphotoxin-Bs1a (34 aa).

Disulfide bonds link cysteine 2–cysteine 16, cysteine 9–cysteine 21, and cysteine 15–cysteine 28.

Expressed by the venom gland.

It is found in the secreted. This is U2-theraphotoxin-Bs1a from Brachypelma smithi (Mexican red knee tarantula).